The chain runs to 834 residues: DNA-directed RNA polymerase subunit beta' (834 aa).

Residues 1–22 show a composition bias toward polar residues; the sequence is MTYSNKPTGSSLRSSRNSTLEP. Positions 1–45 are disordered; it reads MTYSNKPTGSSLRSSRNSTLEPQSLVHREESKRQEGPKGQNLRIG. Residues 26-36 show a composition bias toward basic and acidic residues; sequence VHREESKRQEG. Residues cysteine 101, cysteine 103, cysteine 118, and cysteine 121 each contribute to the Zn(2+) site. Residues aspartate 606, aspartate 608, and aspartate 610 each contribute to the Mg(2+) site.

This sequence belongs to the RNA polymerase beta' chain family. RpoC1 subfamily. As to quaternary structure, in plastids the minimal PEP RNA polymerase catalytic core is composed of four subunits: alpha, beta, beta', and beta''. When a (nuclear-encoded) sigma factor is associated with the core the holoenzyme is formed, which can initiate transcription. Mg(2+) serves as cofactor. The cofactor is Zn(2+).

Its subcellular location is the plastid. It is found in the chloroplast. The catalysed reaction is RNA(n) + a ribonucleoside 5'-triphosphate = RNA(n+1) + diphosphate. Its function is as follows. DNA-dependent RNA polymerase catalyzes the transcription of DNA into RNA using the four ribonucleoside triphosphates as substrates. The sequence is that of DNA-directed RNA polymerase subunit beta' from Staurastrum punctulatum (Green alga).